A 446-amino-acid chain; its full sequence is Chromosomal replication initiator protein DnaA (446 aa).

The segment at 1 to 82 is domain I, interacts with DnaA modulators; that stretch reads MENILDLWNQ…ELSIKFVIPQ (82 aa). Residues 83 to 103 form a domain II region; sequence NQDVEDFMPKPQVKKAVKEDT. The tract at residues 104 to 332 is domain III, AAA+ region; sequence SDFPQNMLNP…VAYSSLINKD (229 aa). ATP contacts are provided by G154, L155, G156, K157, and T158. Mg(2+) is bound at residue T158. Positions 182–206 match the Initiator specific motif (ISM) motif; it reads SEKFTNEFINSIRDNKAVDFRNRYR. D214 and D215 together coordinate Mg(2+). Residues 333-346 are linker; sequence INADLAAEALKDII. A domain IV, binds dsDNA region spans residues 347 to 446; that stretch reads PSSKPKVITI…HVKEIKEQLK (100 aa).

It belongs to the DnaA family. The DNA replisome assembles sequentially on oriC in this order; DnaA, DnaD, DnaB, DnaI-DnaC helicase. Oligomerizes as a right-handed, spiral filament on DNA at oriC. Forms an ATP-dependent helix on DNA at oriC; both DnaD and YabA inhibit formation of the DnaA helix. Forms an ATP-dependent oligomer, formation is stimulated by ds- and ssDNA; monomeric ADP-Soj inhibits oligomer formation. Interacts with DnaD. Interacts with YabA, and via YabA, with the replication machinery subunit beta sliding clamp DnaN. Interacts with YabA via domain IIIa (residues 109-275). Isolated domain I forms a 1:1 complex with SirA. Interacts with Soj, probably via domain III. Interacts via domains I and III with CcrZ. Interacts via domain IV with skin prophage-like element protein YqaH.

It localises to the cytoplasm. Its subcellular location is the nucleoid. It carries out the reaction ATP + H2O = ADP + phosphate + H(+). Oligomerization of DnaA can be controlled by Soj; monomeric ADP-Soj inhibits formation of the DnaA helix. YabA prevents the cooperative binding of DnaA-ATP to oriC-containing sequences; increased levels of DnaN (beta sliding clamp subunit of DNA polymerase) removes YabA from association with DnaA on the chromosome, enabling increased association of DnaA with its chromosomal binding sites. Both Soj and YabA chase DnaA from oriC site, YabA tethers DnaA to the DNA replication fork via the beta sliding clamp subunit DnaN. SirA antagonizes the ability of DnaA to bind to the replication origin, and thus decreases replication inititation during sporulation. Small protein YqaH, part of the skin prophage-like element, binds to DnaA and antagonizes its replication initiation and transcriptional regulation activities. In terms of biological role, plays an essential role in the initiation and regulation of chromosomal replication. ATP-DnaA binds to the origin of replication (oriC) to initiate formation of the DNA replication initiation complex once per cell cycle. Binds directly to oriC at a 9 bp consensus (DnaA box): 5'-TTATCCACA-3' and separates the double-stranded (ds)DNA. Forms a right-handed helical filament on oriC DNA; dsDNA binds to the exterior of the filament while single-stranded (ss)DNA is stabilized in the filament's interior. The ATP-DnaA-oriC complex binds and stabilizes one strand of the AT-rich DNA unwinding element (DUE or basal unwinding system, BUS), permitting loading of DNA polymerase. Binds ATP with high affinity, ADP with lower affinity, but not AMP, cAMP or cGMP; ATP stimulates binding to DnaA boxes. Once bound promotes sequence-specific strand separation of DnaA-trios (3'-GAT-5' consensus) adjacent to oriC in the presence of ATP but not ADP. Domains III and IV are sufficient to separate dsDNA strands. The 'initiator specific motif' (ISM) of domain III contacts the middle adenine residue of the DnaA-trio probably stretching and stabilizing ssDNA. DnaA-trio recognition is co-operative and depends on DnaA self-assembly. The ssDNA serves as an assembly region for the replication machinery. Tethered to DnaN (beta sliding clamp subunit of DNA polymerase) and thus replication forks by YabA. During replication initiation DnaA-ATP binds cooperatively to sequences in oriC. YabA prevents this cooperative binding while still allowing DnaA to bind DNA. During the cell cycle an initial phase occurs in which DnaA is associated with origin regions, then the origin regions become spatially separate from the centrally sequestered DnaA molecules, and most DnaA molecules are unable to reassociate with origin regions. Does not require YabA to bind DNA. During sporulation SirA prevents DnaA association with the replication origin to prevent excessive chromosome replication. Overexpression induces the SOS response; increasing expression of downstream dnaN blocks this induction. Over-initiation of DNA replication is very deleterious; isolated suppressors in relA, ndrR, dnaC, cshA and crrZ increase replication elongation, decrease replication inititation or lead to a decrease in the replicative DNA helicase. Binds acidic phospholipids. Its function is as follows. The half-life of ADP-DnaA is 1.5 minutes, of ATP-DnaA is 5 minutes at 37 degrees Celsius; in E.coli the half-life of ADP-DnaA is about 45 minutes. Also acts as a transcriptional regulator. DnaA inhibits its own gene expression. DnaA binds specifically to the promoter regions of at least 20 operons (56 genes), including itself, sda and dnaB, and probably controls their expression in response to DNA replication inhibition. The sequence is that of Chromosomal replication initiator protein DnaA from Bacillus subtilis (strain 168).